Reading from the N-terminus, the 295-residue chain is Autophagy-related protein 37 (295 aa).

Residues 5 to 103 (VDRVFVHALN…LIDTMHRYAT (99 aa)) enclose the ACB domain. Disordered stretches follow at residues 124 to 162 (NSPS…PLKE) and 174 to 201 (LRSQ…RWQR). Over residues 125-153 (SPSSSLSSPRPNQSTGAGAQQPQQEPEQA) the composition is skewed to low complexity. An N-linked (GlcNAc...) asparagine glycan is attached at asparagine 136. Residues 244–264 (WLLVKHIFADLVILSVVLLWL) traverse the membrane as a helical segment.

Belongs to the ATG37 family.

It localises to the peroxisome membrane. Functionally, acyl-CoA binding protein which acts as the peroxisome receptor for pexophagy. Required for both micropexophagy and macropexophagy, but not for the cytoplasm to vacuole transport (Cvt) or autophagy pathways. Required for functional micropexophagic apparatus (MIPA) and relocation of ATG11 to the peroxisome-sequestering arms of the vacuole. Binds palmitoyl-CoA but not oleyl-CoA. This is Autophagy-related protein 37 from Gibberella zeae (strain ATCC MYA-4620 / CBS 123657 / FGSC 9075 / NRRL 31084 / PH-1) (Wheat head blight fungus).